Reading from the N-terminus, the 840-residue chain is Exocyst complex component 7 (840 aa).

Residues 1 to 112 (MSAPPRLSAR…ATSTTSPFSY (112 aa)) are disordered. Residues 19 to 31 (SNAPSPTSPTGLK) show a composition bias toward polar residues. Low complexity-rich tracts occupy residues 50–73 (KSSV…TLPK) and 83–111 (QQQQ…SPFS). Residues 193–227 (KNNATSELTEQDDQLENDKRDLQFIKEQLEKNNSM) adopt a coiled-coil conformation. The disordered stretch occupies residues 601-638 (QDNNNSNSNSNAPSSTSSNSKSSSSSSSSSSSNSASST). Over residues 603-637 (NNNSNSNSNAPSSTSSNSKSSSSSSSSSSSNSASS) the composition is skewed to low complexity.

Belongs to the EXO70 family. In terms of assembly, the exocyst complex is composed of sec3/exoc1, sec5/exoc2, sec6/exoc3, sec8/exoc4, sec10/exoc5, sec15/exoc6, exo70/exoc7 and exo84/exoc8.

Its subcellular location is the cytoplasm. The protein resides in the cytosol. It localises to the cell membrane. It is found in the midbody. The protein localises to the midbody ring. In terms of biological role, component of the exocyst complex involved in the docking of exocytic vesicles with fusion sites on the plasma membrane. In Dictyostelium discoideum (Social amoeba), this protein is Exocyst complex component 7 (exoc7).